The primary structure comprises 101 residues: Large ribosomal subunit protein uL24 (101 aa).

This sequence belongs to the universal ribosomal protein uL24 family. As to quaternary structure, part of the 50S ribosomal subunit.

One of two assembly initiator proteins, it binds directly to the 5'-end of the 23S rRNA, where it nucleates assembly of the 50S subunit. Its function is as follows. One of the proteins that surrounds the polypeptide exit tunnel on the outside of the subunit. This chain is Large ribosomal subunit protein uL24, found in Borrelia hermsii (strain HS1 / DAH).